A 324-amino-acid polypeptide reads, in one-letter code: Acetyl-coenzyme A carboxylase carboxyl transferase subunit alpha (324 aa).

Residues 44-298 (QLEAKATQLR…KTAIVKSLDD (255 aa)) form the CoA carboxyltransferase C-terminal domain.

The protein belongs to the AccA family. As to quaternary structure, acetyl-CoA carboxylase is a heterohexamer composed of biotin carboxyl carrier protein (AccB), biotin carboxylase (AccC) and two subunits each of ACCase subunit alpha (AccA) and ACCase subunit beta (AccD).

The protein localises to the cytoplasm. It catalyses the reaction N(6)-carboxybiotinyl-L-lysyl-[protein] + acetyl-CoA = N(6)-biotinyl-L-lysyl-[protein] + malonyl-CoA. It functions in the pathway lipid metabolism; malonyl-CoA biosynthesis; malonyl-CoA from acetyl-CoA: step 1/1. Component of the acetyl coenzyme A carboxylase (ACC) complex. First, biotin carboxylase catalyzes the carboxylation of biotin on its carrier protein (BCCP) and then the CO(2) group is transferred by the carboxyltransferase to acetyl-CoA to form malonyl-CoA. This chain is Acetyl-coenzyme A carboxylase carboxyl transferase subunit alpha, found in Trichodesmium erythraeum (strain IMS101).